A 344-amino-acid polypeptide reads, in one-letter code: Phosphate acyltransferase (344 aa).

Belongs to the PlsX family. As to quaternary structure, homodimer. Probably interacts with PlsY.

It is found in the cytoplasm. The catalysed reaction is a fatty acyl-[ACP] + phosphate = an acyl phosphate + holo-[ACP]. It participates in lipid metabolism; phospholipid metabolism. In terms of biological role, catalyzes the reversible formation of acyl-phosphate (acyl-PO(4)) from acyl-[acyl-carrier-protein] (acyl-ACP). This enzyme utilizes acyl-ACP as fatty acyl donor, but not acyl-CoA. This is Phosphate acyltransferase from Paracidovorax citrulli (strain AAC00-1) (Acidovorax citrulli).